We begin with the raw amino-acid sequence, 294 residues long: UPF0282 protein APE_0500.1 (294 aa).

Belongs to the UPF0282 family.

The protein is UPF0282 protein APE_0500.1 of Aeropyrum pernix (strain ATCC 700893 / DSM 11879 / JCM 9820 / NBRC 100138 / K1).